We begin with the raw amino-acid sequence, 93 residues long: Large ribosomal subunit protein eL42 (93 aa).

C11, C14, C71, and C74 together coordinate Zn(2+). The C4-type zinc finger occupies 11 to 74 (CRYCGKHTLH…VNIRFRCTEC (64 aa)).

The protein belongs to the eukaryotic ribosomal protein eL42 family. Part of the 50S ribosomal subunit. Zn(2+) is required as a cofactor.

Binds to the 23S rRNA. This Archaeoglobus fulgidus (strain ATCC 49558 / DSM 4304 / JCM 9628 / NBRC 100126 / VC-16) protein is Large ribosomal subunit protein eL42.